The chain runs to 324 residues: Non-homologous end joining protein Ku 1 (324 aa).

Positions 10 to 193 constitute a Ku domain; it reads INFGLVTIPV…AKPSDKEIQM (184 aa). Residues 256-324 are disordered; the sequence is QARRGRGGQV…SGGRRRRRAS (69 aa). Basic and acidic residues predominate over residues 281–292; it reads AELDKKAKELGI.

Belongs to the prokaryotic Ku family. As to quaternary structure, homodimer. Interacts with LigD.

Functionally, with LigD forms a non-homologous end joining (NHEJ) DNA repair enzyme, which repairs dsDNA breaks with reduced fidelity. Binds linear dsDNA with 5'- and 3'- overhangs but not closed circular dsDNA nor ssDNA. Recruits and stimulates the ligase activity of LigD. The polypeptide is Non-homologous end joining protein Ku 1 (Saccharopolyspora erythraea (strain ATCC 11635 / DSM 40517 / JCM 4748 / NBRC 13426 / NCIMB 8594 / NRRL 2338)).